Here is a 280-residue protein sequence, read N- to C-terminus: 1-cyclohexenylcarbonyl-CoA reductase (280 aa).

NADP(+) is bound by residues 22–25 (SRGI), 71–72 (DV), and Asn-98. Active-site proton acceptor residues include Tyr-158 and Lys-165. NADP(+) is bound by residues Lys-165 and 194-196 (IDS).

Belongs to the short-chain dehydrogenases/reductases (SDR) family. In terms of assembly, homodimer.

It carries out the reaction (4R,5R)-4,5-dihydroxycyclohex-2-ene-1-carbonyl-CoA + NADP(+) = (3R,4R)-3,4-dihydroxycyclohexa-1,5-diene-1-carbonyl-CoA + NADPH + H(+). The enzyme catalyses (3S)-3-hydroxycyclohexane-1-carbonyl-CoA + NADP(+) = (5S)-5-hydroxycyclohex-1-ene-1-carbonyl-CoA + NADPH + H(+). The catalysed reaction is cyclohexane-1-carbonyl-CoA + NADP(+) = cyclohex-1-ene-1-carbonyl-CoA + NADPH + H(+). Its pathway is antibiotic biosynthesis. Inhibited by the thiol inhibitors p-chloromercuribenzoate, N-ethylmaleimide and iodoacetamide. Also inhibited by various divalent cations. Involved in the biosynthesis of the antifungal antibiotic ansatrienin A (mycotrienin I). Catalyzes three of the reductive steps involved in the formation of the cyclohexanecarboxylic acid (CHC) moiety of ansatrienin from shikimic acid. Can use 3,4-dihydroxycyclohexa-1,5-diene-1-carbonyl-CoA, 5-hydroxycyclohex-1-ene-1-carbonyl-CoA and cyclohex-1-ene-1-carbonyl-CoA as substrates. The chain is 1-cyclohexenylcarbonyl-CoA reductase from Streptomyces collinus.